The primary structure comprises 174 residues: CASP-like protein 4D2 (174 aa).

Over 1–14 (MAPPPPSPPAVSLK) the chain is Cytoplasmic. Residues 15-35 (VLLLLLRVLTGVFLVIALIIL) traverse the membrane as a helical segment. The Extracellular portion of the chain corresponds to 36 to 60 (STNSVTIVSQGSALKFHFKDVYAYR). Residues 61–81 (YMLSAAVIGLVYAVIQLFFTI) traverse the membrane as a helical segment. Residues 82–97 (SEFATGVKNPFNYQLD) are Cytoplasmic-facing. The chain crosses the membrane as a helical span at residues 98–118 (FYGDKLISYLVATGSAAGFGV). Over 119–150 (TKDLKDTFLALVALDSTDPVDKFFSKGYASAS) the chain is Extracellular. A helical transmembrane segment spans residues 151 to 171 (LLLFAFICLAVLSVFSSFAMA). At 172–174 (KRN) the chain is on the cytoplasmic side.

This sequence belongs to the Casparian strip membrane proteins (CASP) family. As to quaternary structure, homodimer and heterodimers.

It is found in the cell membrane. The polypeptide is CASP-like protein 4D2 (Arabidopsis thaliana (Mouse-ear cress)).